A 253-amino-acid chain; its full sequence is Ubiquinone/menaquinone biosynthesis C-methyltransferase UbiE (253 aa).

Residues threonine 76, aspartate 97, and 125–126 each bind S-adenosyl-L-methionine; that span reads NA.

It belongs to the class I-like SAM-binding methyltransferase superfamily. MenG/UbiE family.

The enzyme catalyses a 2-demethylmenaquinol + S-adenosyl-L-methionine = a menaquinol + S-adenosyl-L-homocysteine + H(+). The catalysed reaction is a 2-methoxy-6-(all-trans-polyprenyl)benzene-1,4-diol + S-adenosyl-L-methionine = a 5-methoxy-2-methyl-3-(all-trans-polyprenyl)benzene-1,4-diol + S-adenosyl-L-homocysteine + H(+). The protein operates within quinol/quinone metabolism; menaquinone biosynthesis; menaquinol from 1,4-dihydroxy-2-naphthoate: step 2/2. It participates in cofactor biosynthesis; ubiquinone biosynthesis. In terms of biological role, methyltransferase required for the conversion of demethylmenaquinol (DMKH2) to menaquinol (MKH2) and the conversion of 2-polyprenyl-6-methoxy-1,4-benzoquinol (DDMQH2) to 2-polyprenyl-3-methyl-6-methoxy-1,4-benzoquinol (DMQH2). The protein is Ubiquinone/menaquinone biosynthesis C-methyltransferase UbiE of Bradyrhizobium diazoefficiens (strain JCM 10833 / BCRC 13528 / IAM 13628 / NBRC 14792 / USDA 110).